A 20-amino-acid chain; its full sequence is KNWAVLVAGSNGWPNYRHHA.

Belongs to the peptidase C13 family.

It catalyses the reaction Hydrolysis of proteins and small molecule substrates at -Asn-|-Xaa- bonds.. The polypeptide is Hemoglobinase-like protein 1 (Fasciola hepatica (Liver fluke)).